Here is a 389-residue protein sequence, read N- to C-terminus: Urea transporter 1 (389 aa).

The next 5 membrane-spanning stretches (helical) occupy residues 53 to 73 (PVVL…VFVN), 91 to 110 (WWAL…ALLL), 116 to 136 (LIAS…MAVF), 143 to 163 (FWWL…FSSA), and 173 to 193 (LPVF…ATGH). N-linked (GlcNAc...) asparagine glycosylation is present at N211. 4 helical membrane-spanning segments follow: residues 242-262 (GGIF…HAAI), 281-301 (IYFG…GGMF), 310-330 (LLAL…ANFM), and 333-353 (VGLP…LIMT).

It belongs to the urea transporter family. In terms of assembly, homotrimer; each subunit contains a pore through which urea permeates. Identified in a complex with STOM. As to expression, detected in erythrocytes (at protein level). Expressed in spleen erythroblasts and tumoral kidney.

Its subcellular location is the cell membrane. The protein localises to the basolateral cell membrane. It catalyses the reaction urea(in) = urea(out). Its activity is regulated as follows. Inhibited by phloretin and para-chloromercuribenzene sulfonate. Functionally, mediates the transport of urea driven by a concentration gradient across the cell membrane of erythrocytes. Also mediates the transport of urea across the cell membrane of the renal inner medullary collecting duct which is critical to the urinary concentrating mechanism. Facilitates water transport in erythrocytes. The protein is Urea transporter 1 (SLC14A1) of Homo sapiens (Human).